We begin with the raw amino-acid sequence, 318 residues long: Protein W (318 aa).

2 disordered regions span residues 1–23 and 38–318; these read MDQDAFILKEDSEVEREAPGGRE and SEPT…KKGA. The segment covering 7–20 has biased composition (basic and acidic residues); that stretch reads ILKEDSEVEREAPG. The segment covering 50 to 59 has biased composition (polar residues); it reads LHNTINTPQG. S68 carries the phosphoserine; by host modification. The span at 83 to 101 shows a compositional bias: basic and acidic residues; that stretch reads RSGEESRVSGRTSKPEAEA. S125 is modified (phosphoserine; by host). Positions 150–168 are enriched in basic and acidic residues; it reads GIEDENREMAAHPDKRGED. Residues 191–206 show a composition bias toward polar residues; the sequence is ASNNGRSMEPGSSHSA. A phosphoserine; by host mark is found at S192, S249, S257, and S260.

The protein is Protein W (P/V/C) of Sendai virus (strain Harris) (SeV).